A 92-amino-acid chain; its full sequence is Bombyxin A-6 (92 aa).

The N-terminal stretch at 1–19 (MKILLAIALMLSTVMWVST) is a signal peptide. Gln20 is modified (pyrrolidone carboxylic acid). Intrachain disulfides connect Cys29–Cys79, Cys41–Cys92, and Cys78–Cys83. Residues 50–70 (SGAQFASYGSAWLMPYSEGRG) constitute a propeptide, c peptide like.

It belongs to the insulin family. Heterodimer of a B chain and an A chain linked by two disulfide bonds.

It is found in the secreted. Functionally, brain peptide responsible for activation of prothoracic glands to produce ecdysone in insects. The polypeptide is Bombyxin A-6 (BBXA6) (Bombyx mori (Silk moth)).